The primary structure comprises 446 residues: Phosphoglucosamine mutase (446 aa).

The active-site Phosphoserine intermediate is the serine 100. 4 residues coordinate Mg(2+): serine 100, aspartate 241, aspartate 243, and aspartate 245. Serine 100 carries the post-translational modification Phosphoserine.

It belongs to the phosphohexose mutase family. Mg(2+) serves as cofactor. In terms of processing, activated by phosphorylation.

The catalysed reaction is alpha-D-glucosamine 1-phosphate = D-glucosamine 6-phosphate. In terms of biological role, catalyzes the conversion of glucosamine-6-phosphate to glucosamine-1-phosphate. This chain is Phosphoglucosamine mutase, found in Methylorubrum extorquens (strain CM4 / NCIMB 13688) (Methylobacterium extorquens).